A 238-amino-acid chain; its full sequence is tRNA (guanine-N(7)-)-methyltransferase (238 aa).

Residues E70, D95, D122, and D145 each coordinate S-adenosyl-L-methionine. D145 is an active-site residue. Substrate contacts are provided by residues K149, D181, and 216-219; that span reads TKFE.

Belongs to the class I-like SAM-binding methyltransferase superfamily. TrmB family.

The enzyme catalyses guanosine(46) in tRNA + S-adenosyl-L-methionine = N(7)-methylguanosine(46) in tRNA + S-adenosyl-L-homocysteine. It functions in the pathway tRNA modification; N(7)-methylguanine-tRNA biosynthesis. Functionally, catalyzes the formation of N(7)-methylguanine at position 46 (m7G46) in tRNA. This is tRNA (guanine-N(7)-)-methyltransferase from Neisseria meningitidis serogroup C / serotype 2a (strain ATCC 700532 / DSM 15464 / FAM18).